Reading from the N-terminus, the 154-residue chain is MSTSLAVLRLDRELPMPARAHDGDAGVDLFSARDVELAPGQRELVPTGIAVAIPHGMVGLVHPRSGLAARVGLSIVNSPGTIDAGYRGEIKVSLINLDPHAPIVIRRGDRIAQLLVQRVELPELVEVTSFDEAGLAETTRGEGGHGSSGGHASL.

Residues 64-66 (RSG), Asn-77, 81-83 (TID), and Lys-91 each bind substrate.

The protein belongs to the dUTPase family. As to quaternary structure, homotrimer. The cofactor is Mg(2+).

It carries out the reaction dUTP + H2O = dUMP + diphosphate + H(+). Its pathway is pyrimidine metabolism; dUMP biosynthesis; dUMP from dCTP (dUTP route): step 2/2. Functionally, this enzyme is involved in nucleotide metabolism: it produces dUMP, the immediate precursor of thymidine nucleotides and it decreases the intracellular concentration of dUTP so that uracil cannot be incorporated into DNA. The polypeptide is Deoxyuridine 5'-triphosphate nucleotidohydrolase (Mycobacterium sp. (strain JLS)).